The primary structure comprises 437 residues: Probable N-acetylmuramidase (437 aa).

Residues 1–57 form the signal peptide; that stretch reads MPVSRVKVKNRHLKKKTKKPLAFYKPATKFAGAVLIAGTLTTTHELLLQQTSPMVQA. 3 disordered regions span residues 217 to 244, 290 to 320, and 367 to 392; these read SSAGNTNSGGSTTTITNNNSGTNSSSTT, ASSTNSGGSNNSASTTPTTSVTPAKPTSQTT, and AASNPSTGSGSTATNNSNSTSSNSNA. The LysM 1 domain maps to 243–286; the sequence is TTYTVKSGDTLWGISQRYGISVAQIQSANNLKSTIIYIGQKLVL. A compositionally biased stretch (low complexity) spans 290–317; it reads ASSTNSGGSNNSASTTPTTSVTPAKPTS. One can recognise a LysM 2 domain in the interval 319–362; the sequence is TTVKVKSGDTLWALSVKYKTSIAQLKSWNHLSSDTIYIGQNLIV. In terms of domain architecture, LysM 3 spans 393 to 436; that stretch reads SIHKVVKGDTLWGLSQKSGSPIASIKAWNHLSSDTILIGQYLRI.

This sequence belongs to the glycosyl hydrolase 73 family.

The protein localises to the secreted. The catalysed reaction is Hydrolysis of (1-&gt;4)-beta-linkages between N-acetylmuramic acid and N-acetyl-D-glucosamine residues in a peptidoglycan and between N-acetyl-D-glucosamine residues in chitodextrins.. In terms of biological role, hydrolyzes the cell wall of L.lactis and M.lysodeikticus. Required for cell separation during growth. This is Probable N-acetylmuramidase (acmA) from Lactococcus lactis subsp. cremoris (strain MG1363).